Consider the following 201-residue polypeptide: Myelomonocytic growth factor (201 aa).

Positions 1-23 (MCCLTPVLALALVLGAPWQALHG) are cleaved as a signal peptide. Intrachain disulfides connect C61/C67 and C89/C99. 2 N-linked (GlcNAc...) asparagine glycosylation sites follow: N123 and N137.

Belongs to the IL-6 superfamily.

The protein resides in the secreted. Its function is as follows. Hematopoietic growth factor that stimulates the proliferation and colony formation of normal and transformed avian cells of the myeloid lineage. The chain is Myelomonocytic growth factor from Gallus gallus (Chicken).